The chain runs to 118 residues: UPF0102 protein Francci3_3586 (118 aa).

It belongs to the UPF0102 family.

This is UPF0102 protein Francci3_3586 from Frankia casuarinae (strain DSM 45818 / CECT 9043 / HFP020203 / CcI3).